Consider the following 274-residue polypeptide: Karrikin insensitive 2 receptor IA (274 aa).

Ser95 (nucleophile) is an active-site residue. Residues Asp217 and His246 contribute to the active site.

The protein belongs to the AB hydrolase superfamily. As to quaternary structure, interacts with MAX2A and MAX2B in the presence of (-)-germacrene D, thus forming an E3 SCF ubiquitin ligase complex (ASK-cullin-F-box) containing MAX2A or MAX2B and KAI2IA recognizing SMAX1A; this leads to the subsequent degradation of the transcriptional corepressor SMAX1A, thus triggering the activation of a downstream signaling cascade. As to expression, strongly expressed in stigma.

Its subcellular location is the nucleus. The protein localises to the cytoplasm. With respect to regulation, hydrolysis activity toward yoshimulactone green (YLG), a fluorescent agonist to strigolactone receptor, is inhibited by (-)-germacrene D and GR24, a synthetic strigolactone analog. Functionally, hydrolase involved in the olfaction of sesquiterpene volatile organic compounds (VOCs) during volatile plant communication in a MAX2 proteins-dependent manner. Acts as a karrikin-insensitive receptor that stereospecifically perceives and binds to (-)-germacrene D, particularly in stigmas, and triggers a signaling cascade influencing plant fitness, as the result of reproductive organ growth-promoting effect; this process involves an interaction with MAX2 proteins (e.g. MAX2A and MAX2B) and the subsequent degradation of SMAX1a, a transcriptional corepressor. This chain is Karrikin insensitive 2 receptor IA, found in Petunia hybrida (Petunia).